A 185-amino-acid chain; its full sequence is ATP synthase subunit b, chloroplastic (185 aa).

A helical membrane pass occupies residues 27 to 49 (LATNPINLSVVLGVLVFFGKGVL).

It belongs to the ATPase B chain family. F-type ATPases have 2 components, F(1) - the catalytic core - and F(0) - the membrane proton channel. F(1) has five subunits: alpha(3), beta(3), gamma(1), delta(1), epsilon(1). F(0) has four main subunits: a(1), b(1), b'(1) and c(10-14). The alpha and beta chains form an alternating ring which encloses part of the gamma chain. F(1) is attached to F(0) by a central stalk formed by the gamma and epsilon chains, while a peripheral stalk is formed by the delta, b and b' chains.

The protein resides in the plastid. The protein localises to the chloroplast thylakoid membrane. Its function is as follows. F(1)F(0) ATP synthase produces ATP from ADP in the presence of a proton or sodium gradient. F-type ATPases consist of two structural domains, F(1) containing the extramembraneous catalytic core and F(0) containing the membrane proton channel, linked together by a central stalk and a peripheral stalk. During catalysis, ATP synthesis in the catalytic domain of F(1) is coupled via a rotary mechanism of the central stalk subunits to proton translocation. Component of the F(0) channel, it forms part of the peripheral stalk, linking F(1) to F(0). The polypeptide is ATP synthase subunit b, chloroplastic (Glycine max (Soybean)).